The primary structure comprises 111 residues: MGNKRIKAMMILVVMIMMVFSWRICEADSLRRYSSSSRPQRFFKVRRPNPRNHHHQNQGFNGDDYPPESFSGFLPKTLPIPHSAPSRKHNVYGLQRTNSRSSYFWTHAHLS.

The first 27 residues, 1–27, serve as a signal peptide directing secretion; it reads MGNKRIKAMMILVVMIMMVFSWRICEA. Positions 46–56 are enriched in basic residues; that stretch reads RRPNPRNHHHQ. Residues 46-65 are disordered; that stretch reads RRPNPRNHHHQNQGFNGDDY.

As to expression, expressed mainly in flowers. Lower levels in buds and seedlings. Detected in vascular tissues and in hydathodes.

The protein resides in the secreted. Its subcellular location is the extracellular space. Its function is as follows. May be involved in floral abscission. This is Protein IDA-LIKE 5 (IDL5) from Arabidopsis thaliana (Mouse-ear cress).